The following is a 54-amino-acid chain: ATP synthase F(0) complex subunit 8 (54 aa).

A helical membrane pass occupies residues 9 to 29; it reads WFMILFFSWVIFLTIIPTKII. The interval 35–54 is disordered; that stretch reads NDPTQVDAKEHKNDTWNWPW.

It belongs to the ATPase protein 8 family. Component of the ATP synthase complex composed at least of ATP5F1A/subunit alpha, ATP5F1B/subunit beta, ATP5MC1/subunit c (homooctomer), MT-ATP6/subunit a, MT-ATP8/subunit 8, ATP5ME/subunit e, ATP5MF/subunit f, ATP5MG/subunit g, ATP5MK/subunit k, ATP5MJ/subunit j, ATP5F1C/subunit gamma, ATP5F1D/subunit delta, ATP5F1E/subunit epsilon, ATP5PF/subunit F6, ATP5PB/subunit b, ATP5PD/subunit d, ATP5PO/subunit OSCP. ATP synthase complex consists of a soluble F(1) head domain (subunits alpha(3) and beta(3)) - the catalytic core - and a membrane F(0) domain - the membrane proton channel (subunits c, a, 8, e, f, g, k and j). These two domains are linked by a central stalk (subunits gamma, delta, and epsilon) rotating inside the F1 region and a stationary peripheral stalk (subunits F6, b, d, and OSCP).

It localises to the mitochondrion membrane. Its function is as follows. Subunit 8, of the mitochondrial membrane ATP synthase complex (F(1)F(0) ATP synthase or Complex V) that produces ATP from ADP in the presence of a proton gradient across the membrane which is generated by electron transport complexes of the respiratory chain. ATP synthase complex consist of a soluble F(1) head domain - the catalytic core - and a membrane F(1) domain - the membrane proton channel. These two domains are linked by a central stalk rotating inside the F(1) region and a stationary peripheral stalk. During catalysis, ATP synthesis in the catalytic domain of F(1) is coupled via a rotary mechanism of the central stalk subunits to proton translocation. In vivo, can only synthesize ATP although its ATP hydrolase activity can be activated artificially in vitro. Part of the complex F(0) domain. The polypeptide is ATP synthase F(0) complex subunit 8 (Danio rerio (Zebrafish)).